Consider the following 314-residue polypeptide: Replication initiation protein (314 aa).

Over residues Met1–Ser10 the composition is skewed to polar residues. Residues Met1–Gly25 are disordered. Over residues Asn11–Asn20 the composition is skewed to basic and acidic residues.

This sequence belongs to the plasmid replication initiation factor family.

Functionally, this protein is probably a specific topoisomerase involved in initiating replication. This protein is specifically required and may be rate-limiting for replication of the plasmid in vivo. The polypeptide is Replication initiation protein (repN) (Staphylococcus aureus).